A 126-amino-acid chain; its full sequence is Histone H2B type 1-L (126 aa).

The span at 1–12 shows a compositional bias: low complexity; sequence MPELAKSAPAPK. Positions 1 to 36 are disordered; sequence MPELAKSAPAPKKGSKKAVTKAQKKDGKKRKRSRKE. N-acetylproline is present on P2. The residue at position 3 (E3) is an ADP-ribosyl glutamic acid. K6 bears the N6-(2-hydroxyisobutyryl)lysine; alternate mark. K6 is subject to N6-(beta-hydroxybutyryl)lysine; alternate. Residue K6 is modified to N6-acetyllysine; alternate. K6 is subject to N6-butyryllysine; alternate. K6 is subject to N6-crotonyllysine; alternate. K6 is subject to N6-lactoyllysine; alternate. K6 is covalently cross-linked (Glycyl lysine isopeptide (Lys-Gly) (interchain with G-Cter in SUMO2); alternate). Residue S7 is modified to ADP-ribosylserine. K12 carries the post-translational modification N6-(beta-hydroxybutyryl)lysine; alternate. Residues K12 and K13 each carry the N6-acetyllysine; alternate modification. Residues K12 and K13 each carry the N6-crotonyllysine; alternate modification. N6-lactoyllysine; alternate is present on K12. Residue K13 is modified to N6-(2-hydroxyisobutyryl)lysine; alternate. Residue S15 is modified to Phosphoserine; by STK4/MST1. 4 positions are modified to N6-acetyllysine; alternate: K16, K17, K21, and K24. Residues K16, K17, K21, and K24 each carry the N6-crotonyllysine; alternate modification. K16, K17, K21, and K24 each carry N6-lactoyllysine; alternate. 2 positions are modified to N6-(beta-hydroxybutyryl)lysine; alternate: K17 and K21. An N6-glutaryllysine; alternate modification is found at K17. An N6-(2-hydroxyisobutyryl)lysine; alternate mark is found at K21 and K24. K21 carries the N6-butyryllysine; alternate modification. Residue K21 forms a Glycyl lysine isopeptide (Lys-Gly) (interchain with G-Cter in SUMO2); alternate linkage. N6-(2-hydroxyisobutyryl)lysine is present on K25. K35 carries the post-translational modification N6-(2-hydroxyisobutyryl)lysine; alternate. K35 carries the post-translational modification N6-(beta-hydroxybutyryl)lysine; alternate. K35 carries the post-translational modification N6-crotonyllysine; alternate. K35 carries the post-translational modification N6-glutaryllysine; alternate. K35 carries the post-translational modification N6-succinyllysine; alternate. K35 is covalently cross-linked (Glycyl lysine isopeptide (Lys-Gly) (interchain with G-Cter in ubiquitin); alternate). Position 36 is a polyADP-ribosyl glutamic acid (E36). The residue at position 37 (S37) is a Phosphoserine; by AMPK. Residues K44, K47, and K58 each carry the N6-(2-hydroxyisobutyryl)lysine; alternate modification. N6-lactoyllysine; alternate is present on K44. N6-glutaryllysine; alternate is present on residues K44 and K47. K47 is modified (N6-methyllysine; alternate). K58 carries the post-translational modification N6,N6-dimethyllysine; alternate. Position 80 is a dimethylated arginine (R80). An N6-(2-hydroxyisobutyryl)lysine; alternate modification is found at K86. At K86 the chain carries N6-(beta-hydroxybutyryl)lysine; alternate. Position 86 is an N6-acetyllysine; alternate (K86). K86 is subject to N6-lactoyllysine; alternate. Position 86 is an N6,N6,N6-trimethyllysine; alternate (K86). 2 positions are modified to omega-N-methylarginine: R87 and R93. Position 109 is an N6-(2-hydroxyisobutyryl)lysine; alternate (K109). K109 is modified (N6-lactoyllysine; alternate). At K109 the chain carries N6-glutaryllysine; alternate. An N6-methyllysine; alternate modification is found at K109. The O-linked (GlcNAc) serine glycan is linked to S113. T116 is modified (phosphothreonine). N6-(2-hydroxyisobutyryl)lysine; alternate occurs at positions 117 and 121. N6-(beta-hydroxybutyryl)lysine; alternate is present on residues K117 and K121. Residues K117 and K121 each carry the N6-lactoyllysine; alternate modification. An N6-glutaryllysine; alternate mark is found at K117 and K121. Residues K117 and K121 each carry the N6-succinyllysine; alternate modification. An N6-malonyllysine; alternate modification is found at K117. K117 bears the N6-methylated lysine; alternate mark. A Glycyl lysine isopeptide (Lys-Gly) (interchain with G-Cter in ubiquitin); alternate cross-link involves residue K121.

It belongs to the histone H2B family. In terms of assembly, the nucleosome is a histone octamer containing two molecules each of H2A, H2B, H3 and H4 assembled in one H3-H4 heterotetramer and two H2A-H2B heterodimers. The octamer wraps approximately 147 bp of DNA. Monoubiquitination at Lys-35 (H2BK34Ub) by the MSL1/MSL2 dimer is required for histone H3 'Lys-4' (H3K4me) and 'Lys-79' (H3K79me) methylation and transcription activation at specific gene loci, such as HOXA9 and MEIS1 loci. Similarly, monoubiquitination at Lys-121 (H2BK120Ub) by the RNF20/40 complex gives a specific tag for epigenetic transcriptional activation and is also prerequisite for histone H3 'Lys-4' and 'Lys-79' methylation. It also functions cooperatively with the FACT dimer to stimulate elongation by RNA polymerase II. H2BK120Ub also acts as a regulator of mRNA splicing: deubiquitination by USP49 is required for efficient cotranscriptional splicing of a large set of exons. Post-translationally, phosphorylation at Ser-37 (H2BS36ph) by AMPK in response to stress promotes transcription. Phosphorylated on Ser-15 (H2BS14ph) by STK4/MST1 during apoptosis; which facilitates apoptotic chromatin condensation. Also phosphorylated on Ser-15 in response to DNA double strand breaks (DSBs), and in correlation with somatic hypermutation and immunoglobulin class-switch recombination. In terms of processing, glcNAcylation at Ser-113 promotes monoubiquitination of Lys-121. It fluctuates in response to extracellular glucose, and associates with transcribed genes. ADP-ribosylated by PARP1 or PARP2 on Ser-7 (H2BS6ADPr) in response to DNA damage. H2BS6ADPr promotes recruitment of CHD1L. Mono-ADP-ribosylated on Glu-3 (H2BE2ADPr) by PARP3 in response to single-strand breaks. Poly ADP-ribosylation on Glu-36 (H2BE35ADPr) by PARP1 regulates adipogenesis: it inhibits phosphorylation at Ser-37 (H2BS36ph), thereby blocking expression of pro-adipogenetic genes. Post-translationally, crotonylation (Kcr) is specifically present in male germ cells and marks testis-specific genes in post-meiotic cells, including X-linked genes that escape sex chromosome inactivation in haploid cells. Crotonylation marks active promoters and enhancers and confers resistance to transcriptional repressors. It is also associated with post-meiotically activated genes on autosomes. In terms of processing, lactylated in macrophages by EP300/P300 by using lactoyl-CoA directly derived from endogenous or exogenous lactate, leading to stimulates gene transcription.

Its subcellular location is the nucleus. It localises to the chromosome. In terms of biological role, core component of nucleosome. Nucleosomes wrap and compact DNA into chromatin, limiting DNA accessibility to the cellular machineries which require DNA as a template. Histones thereby play a central role in transcription regulation, DNA repair, DNA replication and chromosomal stability. DNA accessibility is regulated via a complex set of post-translational modifications of histones, also called histone code, and nucleosome remodeling. The chain is Histone H2B type 1-L from Homo sapiens (Human).